The primary structure comprises 297 residues: Sirohydrochlorin cobaltochelatase CbiKP (297 aa).

Positions 1–28 (MSRHPMVTRLLCLVFSCLIILACSPAFA) are cleaved as a signal peptide. Residue histidine 124 coordinates heme. The active-site Proton acceptor is histidine 182. Co(2+) is bound by residues histidine 182, glutamate 212, and histidine 244.

Belongs to the CbiK family. In terms of assembly, homotetramer; dimer of dimers.

It is found in the periplasm. It catalyses the reaction Co-sirohydrochlorin + 2 H(+) = sirohydrochlorin + Co(2+). The catalysed reaction is siroheme + 2 H(+) = sirohydrochlorin + Fe(2+). In terms of biological role, catalyzes the insertion of Co(2+) into sirohydrochlorin. To a lesser extent, is also able to insert Fe(2+) into sirohydrochlorin, yielding siroheme. Its periplasmic location means that it cannot participate in cobalamin biosynthesis and its genomic environment suggests it is likely to be associated with a heme or metal transport system. The polypeptide is Sirohydrochlorin cobaltochelatase CbiKP (cbiKp) (Nitratidesulfovibrio vulgaris (strain ATCC 29579 / DSM 644 / CCUG 34227 / NCIMB 8303 / VKM B-1760 / Hildenborough) (Desulfovibrio vulgaris)).